We begin with the raw amino-acid sequence, 294 residues long: Ribosomal RNA small subunit methyltransferase H (294 aa).

S-adenosyl-L-methionine contacts are provided by residues 36–38 (GGH), aspartate 55, phenylalanine 82, aspartate 97, and glutamine 104. The tract at residues 265–285 (KPTVATDDEQNRNPRSRSAKW) is disordered.

Belongs to the methyltransferase superfamily. RsmH family.

The protein resides in the cytoplasm. The enzyme catalyses cytidine(1402) in 16S rRNA + S-adenosyl-L-methionine = N(4)-methylcytidine(1402) in 16S rRNA + S-adenosyl-L-homocysteine + H(+). Functionally, specifically methylates the N4 position of cytidine in position 1402 (C1402) of 16S rRNA. The protein is Ribosomal RNA small subunit methyltransferase H of Synechococcus sp. (strain CC9902).